The sequence spans 108 residues: PTS system cellobiose-specific EIIB component (108 aa).

Residues 3–108 form the PTS EIIB type-3 domain; sequence DKVIALACAA…VLAAAENLMN (106 aa). Residue Cys-10 is the Phosphocysteine intermediate of the active site. Position 10 is a phosphocysteine; by EIIA (Cys-10).

The enzyme catalyses D-cellobiose(out) + N(pros)-phospho-L-histidyl-[protein] = 6-phospho-beta-D-glucosyl-(1-&gt;4)-D-glucose(in) + L-histidyl-[protein]. The phosphoenolpyruvate-dependent sugar phosphotransferase system (sugar PTS), a major carbohydrate active transport system, catalyzes the phosphorylation of incoming sugar substrates concomitantly with their translocation across the cell membrane. Involved in cellobiose transport with PtcA and CelB. This system can also transport lactose. This is PTS system cellobiose-specific EIIB component from Lactococcus lactis subsp. lactis (strain IL1403) (Streptococcus lactis).